Reading from the N-terminus, the 243-residue chain is 3-deoxy-manno-octulosonate cytidylyltransferase (243 aa).

The protein belongs to the KdsB family.

The protein resides in the cytoplasm. It catalyses the reaction 3-deoxy-alpha-D-manno-oct-2-ulosonate + CTP = CMP-3-deoxy-beta-D-manno-octulosonate + diphosphate. It participates in nucleotide-sugar biosynthesis; CMP-3-deoxy-D-manno-octulosonate biosynthesis; CMP-3-deoxy-D-manno-octulosonate from 3-deoxy-D-manno-octulosonate and CTP: step 1/1. The protein operates within bacterial outer membrane biogenesis; lipopolysaccharide biosynthesis. In terms of biological role, activates KDO (a required 8-carbon sugar) for incorporation into bacterial lipopolysaccharide in Gram-negative bacteria. The chain is 3-deoxy-manno-octulosonate cytidylyltransferase from Helicobacter pylori (strain J99 / ATCC 700824) (Campylobacter pylori J99).